The following is a 344-amino-acid chain: Serine proteinase inhibitor 2 (344 aa).

This sequence belongs to the serpin family. Poxviruses subfamily.

The protein localises to the host cytoplasm. Functionally, viral serpin that inhibits both cysteine and serine proteinases involved in the regulation of host inflammatory and apoptosis processes. Major anti-apoptotic protein which inhibits both intrinsic and extrinsic pathways and strongly cleaves host CASP1 and CASP8 but is a rather poor inhibitor of host CASP3. Prevents the proteolytic activity of host interleukin-1-beta converting enzyme (ICE) and ICE-like enzymes. Can also block apoptosis through host tumor necrosis factor (TNF) receptor. The inhibition of host ICE is an example of a 'cross-class' interaction, in which a serpin inhibits a non-serine proteinase. Also inhibits granzyme B. This Cynomys gunnisoni (Gunnison's prairie dog) protein is Serine proteinase inhibitor 2 (OPG199).